Here is a 218-residue protein sequence, read N- to C-terminus: Thiopurine S-methyltransferase (218 aa).

Positions 11, 46, 67, and 122 each coordinate S-adenosyl-L-methionine.

This sequence belongs to the class I-like SAM-binding methyltransferase superfamily. TPMT family.

The protein localises to the cytoplasm. The enzyme catalyses S-adenosyl-L-methionine + a thiopurine = S-adenosyl-L-homocysteine + a thiopurine S-methylether.. The sequence is that of Thiopurine S-methyltransferase from Vibrio cholerae serotype O1 (strain ATCC 39315 / El Tor Inaba N16961).